The following is a 171-amino-acid chain: 3-hydroxydecanoyl-[acyl-carrier-protein] dehydratase (171 aa).

His70 is a catalytic residue.

It belongs to the thioester dehydratase family. FabA subfamily. As to quaternary structure, homodimer.

It is found in the cytoplasm. The enzyme catalyses a (3R)-hydroxyacyl-[ACP] = a (2E)-enoyl-[ACP] + H2O. It carries out the reaction (3R)-hydroxydecanoyl-[ACP] = (2E)-decenoyl-[ACP] + H2O. It catalyses the reaction (2E)-decenoyl-[ACP] = (3Z)-decenoyl-[ACP]. Its pathway is lipid metabolism; fatty acid biosynthesis. Functionally, necessary for the introduction of cis unsaturation into fatty acids. Catalyzes the dehydration of (3R)-3-hydroxydecanoyl-ACP to E-(2)-decenoyl-ACP and then its isomerization to Z-(3)-decenoyl-ACP. Can catalyze the dehydratase reaction for beta-hydroxyacyl-ACPs with saturated chain lengths up to 16:0, being most active on intermediate chain length. The chain is 3-hydroxydecanoyl-[acyl-carrier-protein] dehydratase from Pseudomonas syringae pv. syringae (strain B728a).